The primary structure comprises 422 residues: MLQWRRRHCCFAKMTWNAKRSLFRTHLIGVLSLVFLFAMFLFFNHHDWLPGRAGFKENPVTYTFRGFRSTKSETNHSSLRNIWKETVPQTLRPQTATNSNNTDLSPQGVTGLENTLSANGSIYNEKGTGHPNSYHFKYIINEPEKCQEKSPFLILLIAAEPGQIEARRAIRQTWGNESLAPGIQITRIFLLGLSIKLNGYLQRAILEESRQYHDIIQQEYLDTYYNLTIKTLMGMNWVATYCPHIPYVMKTDSDMFVNTEYLINKLLKPDLPPRHNYFTGYLMRGYAPNRNKDSKWYMPPDLYPSERYPVFCSGTGYVFSGDLAEKIFKVSLGIRRLHLEDVYVGICLAKLRIDPVPPPNEFVFNHWRVSYSSCKYSHLITSHQFQPSELIKYWNHLQQNKHNACANAAKEKAGRYRHRKLH.

Topologically, residues 1–24 are cytoplasmic; sequence MLQWRRRHCCFAKMTWNAKRSLFR. A helical; Signal-anchor for type II membrane protein membrane pass occupies residues 25–45; the sequence is THLIGVLSLVFLFAMFLFFNH. Over 46-422 the chain is Lumenal; the sequence is HDWLPGRAGF…AGRYRHRKLH (377 aa). 5 N-linked (GlcNAc...) asparagine glycosylation sites follow: Asn-75, Asn-100, Asn-119, Asn-176, and Asn-226. The disordered stretch occupies residues 90 to 110; sequence TLRPQTATNSNNTDLSPQGVT.

The protein belongs to the glycosyltransferase 31 family. Mn(2+) serves as cofactor. In terms of tissue distribution, detected in heart and brain.

It localises to the golgi apparatus membrane. It carries out the reaction an N-acetyl-beta-D-glucosaminyl derivative + UDP-alpha-D-galactose = a beta-D-galactosyl-(1-&gt;3)-N-acetyl-beta-D-glucosaminyl derivative + UDP + H(+). The enzyme catalyses a beta-D-GlcNAc-(1-&gt;3)-beta-D-Gal-(1-&gt;4)-beta-D-Glc-(1&lt;-&gt;1)-Cer(d18:1(4E)) + UDP-alpha-D-galactose = a beta-D-Gal-(1-&gt;3)-beta-D-GlcNAc-(1-&gt;3)-beta-D-Gal-(1-&gt;4)-beta-D-Glc-(1&lt;-&gt;1')-Cer(d18:1(4E)) + UDP + H(+). It catalyses the reaction a neolactoside IV(3)-beta-GlcNAc-nLc4Cer(d18:1(4E)) + UDP-alpha-D-galactose = a neolactoside IV(3)-beta-[Gal-beta-(1-&gt;3)-GlcNAc]-nLc4Cer(d18:1(4E)) + UDP + H(+). The protein operates within protein modification; protein glycosylation. In terms of biological role, beta-1,3-galactosyltransferase that transfers galactose from UDP-galactose to substrates with a terminal beta-N-acetylglucosamine (beta-GlcNAc) residue. Can also utilize substrates with a terminal galactose residue, albeit with lower efficiency. Involved in the biosynthesis of the carbohydrate moieties of glycolipids and glycoproteins. Inactive towards substrates with terminal alpha-N-acetylglucosamine (alpha-GlcNAc) or alpha-N-acetylgalactosamine (alpha-GalNAc) residues. The polypeptide is Beta-1,3-galactosyltransferase 2 (Homo sapiens (Human)).